Here is a 224-residue protein sequence, read N- to C-terminus: Peptidyl-prolyl cis-trans isomerase FKBP3 (224 aa).

Ala2 bears the N-acetylalanine mark. Ser36 carries the post-translational modification Phosphoserine. The segment covering 89–102 has biased composition (basic and acidic residues); the sequence is KLNEDKPKETKSEE. Residues 89–111 form a disordered region; the sequence is KLNEDKPKETKSEETLDEGPPKY. N6-acetyllysine is present on Lys99. Residues 128–224 enclose the PPIase FKBP-type domain; the sequence is GDVVHCWYTG…TFEVELVDID (97 aa). At Ser152 the chain carries Phosphoserine. Position 170 is an N6-acetyllysine (Lys170).

It belongs to the FKBP-type PPIase family.

Its subcellular location is the nucleus. It catalyses the reaction [protein]-peptidylproline (omega=180) = [protein]-peptidylproline (omega=0). Inhibited preferentially by rapamycin over FK506. FK506- and rapamycin-binding proteins (FKBPs) constitute a family of receptors for the two immunosuppressants which inhibit T-cell proliferation by arresting two distinct cytoplasmic signal transmission pathways. PPIases accelerate the folding of proteins. This Homo sapiens (Human) protein is Peptidyl-prolyl cis-trans isomerase FKBP3 (FKBP3).